A 100-amino-acid chain; its full sequence is Large ribosomal subunit protein uL23 (100 aa).

The protein belongs to the universal ribosomal protein uL23 family. Part of the 50S ribosomal subunit. Contacts protein L29, and trigger factor when it is bound to the ribosome.

Functionally, one of the early assembly proteins it binds 23S rRNA. One of the proteins that surrounds the polypeptide exit tunnel on the outside of the ribosome. Forms the main docking site for trigger factor binding to the ribosome. The polypeptide is Large ribosomal subunit protein uL23 (Mycobacteroides abscessus (strain ATCC 19977 / DSM 44196 / CCUG 20993 / CIP 104536 / JCM 13569 / NCTC 13031 / TMC 1543 / L948) (Mycobacterium abscessus)).